We begin with the raw amino-acid sequence, 99 residues long: DNA-binding protein Fis (99 aa).

A disordered region spans residues 1 to 25 (MFEQKISSEALTTTTSIPATGQITQ). Positions 75–94 (QTRAATMLGINRGTLRKKLK) form a DNA-binding region, H-T-H motif.

This sequence belongs to the transcriptional regulatory Fis family. Homodimer.

Its function is as follows. Activates ribosomal RNA transcription. Plays a direct role in upstream activation of rRNA promoters. The protein is DNA-binding protein Fis of Psychromonas ingrahamii (strain DSM 17664 / CCUG 51855 / 37).